Reading from the N-terminus, the 584-residue chain is MLSLTMLLLERVGLIIILAYVLMNIPYFKNLMNRRRTWKARWQLCIIFSLFALMSNLTGIVIDHQHSLSGSVYFRLDDDVSLANTRVLTIGVAGLVGGPFVGLFVGVISGIFRVYMGGADAQVYLISSIFIGIIAGYFGLQAQRRKRYPSIAKSAMIGIVMEMIQMLSILTFSHDKAYAVDLISLIALPMIIVNSVGTAIFMSIIISTLKQEEQMKAVQTHDVLQLMNQTLPYFKEGLNRESAQQIAMIIKNLMKVSAVAITSKNEILSHVGAGSDHHIPTNEILTSLSKDVLKSGKLKEVHTKEEIGCSHPNCPLRAAIVIPLEMHGSIVGTLKMYFTNPNDLTFVERQLAEGLANIFSSQIELGEAETQSKLLKDAEIKSLQAQVSPHFFFNSINTISALVRINSEKARELLLELSYFFRANLQGSKQHTITLDKELSQVRAYLSLEQARYPGRFNININVEDKYRDVLVPPFLIQILVENAIKHAFTNRKQGNDIDVSVIKETATHVRIIVQDNGQGISKDKMHLLGETSVESESGTGSALENLNLRLKGLFGKSAALQFESTSSGTTFWCVLPYERQEEE.

6 consecutive transmembrane segments (helical) span residues 2–22, 42–62, 92–112, 121–141, 154–174, and 186–206; these read LSLTMLLLERVGLIIILAYVL, WQLCIIFSLFALMSNLTGIVI, VAGLVGGPFVGLFVGVISGIF, AQVYLISSIFIGIIAGYFGLQ, SAMIGIVMEMIQMLSILTFSH, and IALPMIIVNSVGTAIFMSIII. Residues 311 to 363 enclose the GAF domain; sequence HPNCPLRAAIVIPLEMHGSIVGTLKMYFTNPNDLTFVERQLAEGLANIFSSQI. The Histidine kinase domain occupies 379–461; the sequence is EIKSLQAQVS…RYPGRFNINI (83 aa). At histidine 390 the chain carries Phosphohistidine; by autocatalysis.

Autophosphorylated on His-390.

It is found in the cell membrane. It catalyses the reaction ATP + protein L-histidine = ADP + protein N-phospho-L-histidine.. Its function is as follows. Member of the two-component regulatory system LytR/LytS that regulates genes involved in autolysis, programmed cell death, biofilm formation and cell wall metabolism. Also participates in sensing and responding to host defense cationic antimicrobial peptides (HDPs). Functions as a sensor protein kinase which is autophosphorylated at a histidine residue and transfers its phosphate group to the conserved aspartic acid residue in the regulatory domain of LytR. In turn, LytR binds to the upstream promoter regions of target genes including lrgA and lrgB, to positively regulate their expression. Also possesses a phosphatase activity that dephosphorylates and thus inactivates LytR. This Staphylococcus aureus (strain USA300) protein is Sensor histidine kinase/phosphatase LytS (lytS).